Here is a 206-residue protein sequence, read N- to C-terminus: Ribonuclease HII (206 aa).

The RNase H type-2 domain maps to 14-206; sequence ALVCGIDEAG…FRLRQLGEKP (193 aa). A divalent metal cation-binding residues include Asp-20, Glu-21, and Asp-117.

This sequence belongs to the RNase HII family. Mn(2+) serves as cofactor. It depends on Mg(2+) as a cofactor.

Its subcellular location is the cytoplasm. The catalysed reaction is Endonucleolytic cleavage to 5'-phosphomonoester.. Endonuclease that specifically degrades the RNA of RNA-DNA hybrids. This is Ribonuclease HII from Pelodictyon phaeoclathratiforme (strain DSM 5477 / BU-1).